Here is a 372-residue protein sequence, read N- to C-terminus: Ligninase LG6 (372 aa).

Residues 1-21 (MALKQLAAAVALALSIQAAQG) form the signal peptide. The propeptide occupies 22 to 28 (AAVKEKR). Cystine bridges form between cysteine 31-cysteine 43 and cysteine 62-cysteine 148. Residue histidine 75 is the Proton acceptor of the active site. The Ca(2+) site is built by aspartate 76, glycine 94, aspartate 96, and serine 98. A heme b-binding site is contributed by histidine 204. Ca(2+) contacts are provided by serine 205, aspartate 222, threonine 224, valine 227, and aspartate 229. Cysteine 277 and cysteine 345 form a disulfide bridge. An N-linked (GlcNAc...) asparagine glycan is attached at asparagine 285. Residues 352–361 (TLTTLPGPET) show a composition bias toward low complexity. Positions 352–372 (TLTTLPGPETSVQRIQPPPGA) are disordered.

Belongs to the peroxidase family. Ligninase subfamily. The cofactor is heme b. Ca(2+) serves as cofactor.

It carries out the reaction 1-(3,4-dimethoxyphenyl)-2-(2-methoxyphenoxy)propane-1,3-diol + H2O2 = 3,4-dimethoxybenzaldehyde + guaiacol + glycolaldehyde + H2O. The enzyme catalyses 2 (3,4-dimethoxyphenyl)methanol + H2O2 = 2 (3,4-dimethoxyphenyl)methanol radical + 2 H2O. It functions in the pathway secondary metabolite metabolism; lignin degradation. Its function is as follows. Depolymerization of lignin. Catalyzes the C(alpha)-C(beta) cleavage of the propyl side chains of lignin. This Phanerodontia chrysosporium (White-rot fungus) protein is Ligninase LG6 (GLG6).